A 469-amino-acid polypeptide reads, in one-letter code: Diaminopimelate decarboxylase (469 aa).

Positions 1 to 23 are disordered; that stretch reads MLSTEMPLPTTGSTLLKTPASPS. At Lys-93 the chain carries N6-(pyridoxal phosphate)lysine. Residues Gly-279 and 321–324 each bind pyridoxal 5'-phosphate; that span reads EPGR. Substrate contacts are provided by Arg-324, Arg-361, and Tyr-365. Cys-392 functions as the Proton donor in the catalytic mechanism. Residues Glu-393 and Tyr-421 each coordinate substrate. Tyr-421 is a pyridoxal 5'-phosphate binding site.

It belongs to the Orn/Lys/Arg decarboxylase class-II family. LysA subfamily. In terms of assembly, homodimer. Pyridoxal 5'-phosphate is required as a cofactor.

The enzyme catalyses meso-2,6-diaminopimelate + H(+) = L-lysine + CO2. Its pathway is amino-acid biosynthesis; L-lysine biosynthesis via DAP pathway; L-lysine from DL-2,6-diaminopimelate: step 1/1. In terms of biological role, specifically catalyzes the decarboxylation of meso-diaminopimelate (meso-DAP) to L-lysine. In Synechocystis sp. (strain ATCC 27184 / PCC 6803 / Kazusa), this protein is Diaminopimelate decarboxylase.